Reading from the N-terminus, the 36-residue chain is Photosystem I reaction center subunit VIII (36 aa).

A helical transmembrane segment spans residues 8 to 28; that stretch reads SFFVPLVCLVFPAIAMAFLFV.

This sequence belongs to the PsaI family.

It localises to the plastid. It is found in the chloroplast thylakoid membrane. Functionally, may help in the organization of the PsaL subunit. This is Photosystem I reaction center subunit VIII from Chara vulgaris (Common stonewort).